Consider the following 456-residue polypeptide: Bifunctional protein GlmU (456 aa).

Residues 1–229 (MSNRPMSVVI…TTETDGVNNR (229 aa)) form a pyrophosphorylase region. Residues 11 to 14 (LAAG), Lys25, Gln76, 81 to 82 (GT), 103 to 105 (YGD), Gly140, Glu154, Asn169, and Asn227 each bind UDP-N-acetyl-alpha-D-glucosamine. Asp105 contacts Mg(2+). A Mg(2+)-binding site is contributed by Asn227. A linker region spans residues 230 to 250 (LQLATLERVYQAEQAEKLLLS). The interval 251-456 (GVMLQDPARF…ASWQRPQKKK (206 aa)) is N-acetyltransferase. Positions 333 and 351 each coordinate UDP-N-acetyl-alpha-D-glucosamine. His363 functions as the Proton acceptor in the catalytic mechanism. UDP-N-acetyl-alpha-D-glucosamine is bound by residues Tyr366 and Asn377. Residues Ala380, 386–387 (NY), Ser405, Ala423, and Arg440 each bind acetyl-CoA.

The protein in the N-terminal section; belongs to the N-acetylglucosamine-1-phosphate uridyltransferase family. In the C-terminal section; belongs to the transferase hexapeptide repeat family. In terms of assembly, homotrimer. Requires Mg(2+) as cofactor.

The protein resides in the cytoplasm. The catalysed reaction is alpha-D-glucosamine 1-phosphate + acetyl-CoA = N-acetyl-alpha-D-glucosamine 1-phosphate + CoA + H(+). It catalyses the reaction N-acetyl-alpha-D-glucosamine 1-phosphate + UTP + H(+) = UDP-N-acetyl-alpha-D-glucosamine + diphosphate. It participates in nucleotide-sugar biosynthesis; UDP-N-acetyl-alpha-D-glucosamine biosynthesis; N-acetyl-alpha-D-glucosamine 1-phosphate from alpha-D-glucosamine 6-phosphate (route II): step 2/2. The protein operates within nucleotide-sugar biosynthesis; UDP-N-acetyl-alpha-D-glucosamine biosynthesis; UDP-N-acetyl-alpha-D-glucosamine from N-acetyl-alpha-D-glucosamine 1-phosphate: step 1/1. It functions in the pathway bacterial outer membrane biogenesis; LPS lipid A biosynthesis. Its function is as follows. Catalyzes the last two sequential reactions in the de novo biosynthetic pathway for UDP-N-acetylglucosamine (UDP-GlcNAc). The C-terminal domain catalyzes the transfer of acetyl group from acetyl coenzyme A to glucosamine-1-phosphate (GlcN-1-P) to produce N-acetylglucosamine-1-phosphate (GlcNAc-1-P), which is converted into UDP-GlcNAc by the transfer of uridine 5-monophosphate (from uridine 5-triphosphate), a reaction catalyzed by the N-terminal domain. This is Bifunctional protein GlmU from Erwinia tasmaniensis (strain DSM 17950 / CFBP 7177 / CIP 109463 / NCPPB 4357 / Et1/99).